We begin with the raw amino-acid sequence, 67 residues long: Large ribosomal subunit protein bL35 (67 aa).

It belongs to the bacterial ribosomal protein bL35 family.

The chain is Large ribosomal subunit protein bL35 from Methylorubrum extorquens (strain CM4 / NCIMB 13688) (Methylobacterium extorquens).